The chain runs to 216 residues: CDP-diacylglycerol--glycerol-3-phosphate 3-phosphatidyltransferase (216 aa).

Transmembrane regions (helical) follow at residues 40–60 (VVSI…FLDG), 88–108 (VMLC…CILY), 141–161 (MGAV…LAGA), and 176–196 (VVPV…FFPI).

Belongs to the CDP-alcohol phosphatidyltransferase class-I family.

The protein resides in the cell membrane. The enzyme catalyses a CDP-1,2-diacyl-sn-glycerol + sn-glycerol 3-phosphate = a 1,2-diacyl-sn-glycero-3-phospho-(1'-sn-glycero-3'-phosphate) + CMP + H(+). It participates in phospholipid metabolism; phosphatidylglycerol biosynthesis; phosphatidylglycerol from CDP-diacylglycerol: step 1/2. Its function is as follows. This protein catalyzes the committed step to the synthesis of the acidic phospholipids. This Treponema pallidum (strain Nichols) protein is CDP-diacylglycerol--glycerol-3-phosphate 3-phosphatidyltransferase (pgsA).